Consider the following 174-residue polypeptide: Inner membrane protein p22 (174 aa).

Over 1 to 7 the chain is Intravirion; that stretch reads MLHIKMT. A helical transmembrane segment spans residues 8-28; sequence ISTLLIALIVLLIIILVVFLY. Residues 29-174 are Virion surface-facing; the sequence is HKKQQPPKKV…LYLPRNHKYA (146 aa).

Belongs to the asfivirus inner membrane protein p22 family.

The protein localises to the virion membrane. Its subcellular location is the host cell membrane. The protein is Inner membrane protein p22 of African swine fever virus (isolate Pig/Kenya/KEN-50/1950) (ASFV).